The chain runs to 158 residues: MAPRGSQRTVNKIVAENRKARFNYEIIDTYEAGIMLTGTEVKSLREGKANIAESYASDEGEEIWLINSHLPEYLQANRFNHEPRRRRKLLLNKREINRLRVAINREGMTLVPLKIYFNEKGRAKLELALAKGKKLHDKRETEKERDWNRQKSRLLKTG.

The disordered stretch occupies residues 134–158 (KLHDKRETEKERDWNRQKSRLLKTG). The span at 137–149 (DKRETEKERDWNR) shows a compositional bias: basic and acidic residues.

This sequence belongs to the SmpB family.

It is found in the cytoplasm. Its function is as follows. Required for rescue of stalled ribosomes mediated by trans-translation. Binds to transfer-messenger RNA (tmRNA), required for stable association of tmRNA with ribosomes. tmRNA and SmpB together mimic tRNA shape, replacing the anticodon stem-loop with SmpB. tmRNA is encoded by the ssrA gene; the 2 termini fold to resemble tRNA(Ala) and it encodes a 'tag peptide', a short internal open reading frame. During trans-translation Ala-aminoacylated tmRNA acts like a tRNA, entering the A-site of stalled ribosomes, displacing the stalled mRNA. The ribosome then switches to translate the ORF on the tmRNA; the nascent peptide is terminated with the 'tag peptide' encoded by the tmRNA and targeted for degradation. The ribosome is freed to recommence translation, which seems to be the essential function of trans-translation. This chain is SsrA-binding protein, found in Allorhizobium ampelinum (strain ATCC BAA-846 / DSM 112012 / S4) (Agrobacterium vitis (strain S4)).